The sequence spans 159 residues: Succinate dehydrogenase [ubiquinone] cytochrome b small subunit, mitochondrial (159 aa).

Residues 1–36 constitute a mitochondrion transit peptide; it reads MATLWRLSVLCGARGGGALVLRTSVVRPAHVSAFLQ. At 37–63 the chain is on the mitochondrial matrix side; the sequence is DRHTPGWCGVQHIHLSPSHQASSKAAS. The chain crosses the membrane as a helical span at residues 64-85; that stretch reads LHWTGERVVSVLLLGLLPAAYL. Residues 86–90 lie on the Mitochondrial intermembrane side of the membrane; that stretch reads NPCSA. The chain crosses the membrane as a helical span at residues 91–111; sequence MDYSLAAALTLHGHWGIGQVV. A heme b-binding site is contributed by histidine 102. Over 112 to 120 the chain is Mitochondrial matrix; it reads TDYVRGDAL. Tyrosine 114 provides a ligand contact to a ubiquinone. The chain crosses the membrane as a helical span at residues 121-142; the sequence is QKVAKAGLLALSAFTFAGLCYF. The Mitochondrial intermembrane portion of the chain corresponds to 143–159; that stretch reads NYHDVGICKAVAMLWKL.

This sequence belongs to the CybS family. Component of complex II composed of four subunits: the flavoprotein (FP) SDHA, iron-sulfur protein (IP) SDHB, and a cytochrome b560 composed of SDHC and SDHD.

It localises to the mitochondrion inner membrane. Its pathway is carbohydrate metabolism; tricarboxylic acid cycle. Its function is as follows. Membrane-anchoring subunit of succinate dehydrogenase (SDH) that is involved in complex II of the mitochondrial electron transport chain and is responsible for transferring electrons from succinate to ubiquinone (coenzyme Q). SDH also oxidizes malate to the non-canonical enol form of oxaloacetate, enol-oxaloacetate. Enol-oxaloacetate, which is a potent inhibitor of the succinate dehydrogenase activity, is further isomerized into keto-oxaloacetate. The chain is Succinate dehydrogenase [ubiquinone] cytochrome b small subunit, mitochondrial (SDHD) from Sus scrofa (Pig).